Reading from the N-terminus, the 951-residue chain is Glycine dehydrogenase (decarboxylating) 1 (951 aa).

Position 703 is an N6-(pyridoxal phosphate)lysine (lysine 703).

Belongs to the GcvP family. The glycine cleavage system is composed of four proteins: P, T, L and H. Pyridoxal 5'-phosphate is required as a cofactor.

The catalysed reaction is N(6)-[(R)-lipoyl]-L-lysyl-[glycine-cleavage complex H protein] + glycine + H(+) = N(6)-[(R)-S(8)-aminomethyldihydrolipoyl]-L-lysyl-[glycine-cleavage complex H protein] + CO2. The glycine cleavage system catalyzes the degradation of glycine. The P protein binds the alpha-amino group of glycine through its pyridoxal phosphate cofactor; CO(2) is released and the remaining methylamine moiety is then transferred to the lipoamide cofactor of the H protein. This Pseudomonas putida (strain ATCC 47054 / DSM 6125 / CFBP 8728 / NCIMB 11950 / KT2440) protein is Glycine dehydrogenase (decarboxylating) 1 (gcvP1).